The sequence spans 477 residues: Proline--tRNA ligase (477 aa).

Residues T111, E113, and R142 each coordinate L-proline. ATP-binding residues include R142, T153, Q225, and T228. Residue H230 participates in L-proline binding. 2 residues coordinate ATP: S262 and R264. Residues 340–369 are interaction with tRNA; it reads ELKGVPFRVELGPKDLEGGQAVLASRLGGK. Residues C427, C432, C458, and C461 each coordinate Zn(2+).

Belongs to the class-II aminoacyl-tRNA synthetase family. ProS type 3 subfamily. Homodimer. Only one tRNA molecule binds per dimer.

The protein resides in the cytoplasm. It carries out the reaction tRNA(Pro) + L-proline + ATP = L-prolyl-tRNA(Pro) + AMP + diphosphate. Its function is as follows. Catalyzes the attachment of proline to tRNA(Pro) in a two-step reaction: proline is first activated by ATP to form Pro-AMP and then transferred to the acceptor end of tRNA(Pro). Can inadvertently accommodate and process cysteine. The chain is Proline--tRNA ligase (proS) from Thermus thermophilus (strain ATCC 27634 / DSM 579 / HB8).